The chain runs to 551 residues: Cation/acetate symporter ActP (551 aa).

14 helical membrane passes run 5–25 (HWSALSLFVLPALAQAEALTG), 34–54 (IQAIVMFLLFVGGTLYITYWA), 77–97 (GLAIAGDYMSAASFLGISALV), 104–124 (GLIYSIGFLIGWPIILFLIAE), 150–170 (LSACGSLVVVALYLIAQMVGA), 184–204 (VAVVLVGILMVLYVLFGGMLA), 207–227 (WVQIIKAVMLLSGATFMAIMV), 263–283 (ISALSLGLALMFGTAGLPHIL), 304–324 (GFIGYFYILTFIIGFGAILLV), 356–376 (FFLGFISAVAFATILAVVAGL), 406–426 (VSKITVIILGIVAIGLGILFE), 430–450 (IAFMVGLAFSIAASCNFPIII), 469–489 (LGLSTAVILMILGPTIWVTIL), and 498–518 (YEYPALFSMIAAFVGTWFFSI).

This sequence belongs to the sodium:solute symporter (SSF) (TC 2.A.21) family.

It localises to the cell inner membrane. Functionally, transports acetate. The protein is Cation/acetate symporter ActP of Yersinia pestis bv. Antiqua (strain Antiqua).